Reading from the N-terminus, the 701-residue chain is Elongation factor G (701 aa).

Residues 8-290 (SLYRNIGISA…AVVELLPAPT (283 aa)) enclose the tr-type G domain. Residues 17–24 (AHIDAGKT), 88–92 (DTPGH), and 142–145 (NKMD) contribute to the GTP site.

The protein belongs to the TRAFAC class translation factor GTPase superfamily. Classic translation factor GTPase family. EF-G/EF-2 subfamily.

Its subcellular location is the cytoplasm. Catalyzes the GTP-dependent ribosomal translocation step during translation elongation. During this step, the ribosome changes from the pre-translocational (PRE) to the post-translocational (POST) state as the newly formed A-site-bound peptidyl-tRNA and P-site-bound deacylated tRNA move to the P and E sites, respectively. Catalyzes the coordinated movement of the two tRNA molecules, the mRNA and conformational changes in the ribosome. The polypeptide is Elongation factor G (Neisseria meningitidis serogroup C (strain 053442)).